We begin with the raw amino-acid sequence, 276 residues long: Large ribosomal subunit protein uL2 (276 aa).

Disordered stretches follow at residues 29 to 55 and 219 to 276; these read PEKS…RHRG and HVRG…RRTR. Positions 259–276 are enriched in basic residues; that stretch reads TRNKKKQSSKLIVRRRTR.

Belongs to the universal ribosomal protein uL2 family. Part of the 50S ribosomal subunit. Forms a bridge to the 30S subunit in the 70S ribosome.

In terms of biological role, one of the primary rRNA binding proteins. Required for association of the 30S and 50S subunits to form the 70S ribosome, for tRNA binding and peptide bond formation. It has been suggested to have peptidyltransferase activity; this is somewhat controversial. Makes several contacts with the 16S rRNA in the 70S ribosome. The chain is Large ribosomal subunit protein uL2 from Rippkaea orientalis (strain PCC 8801 / RF-1) (Cyanothece sp. (strain PCC 8801)).